The chain runs to 465 residues: MNSSNSNDHENLSAQEFIISDIEEDPDTNYEPPVNDSESENYKDNSDHSNHSSHQNKFYYQNFPENFSKDFSESFNDNQNLKNFNTTDNNFNDDYNNDYDSNNDSNNDSNNDSNNDYDNESNNYFNNDSNNDSNNDSDIEETTKHKLPIERKKRGPPKSIVEGQKKYIEMMERQNRMIKKDKNKSLKQMDAVKLPTSNAKPGPETRRVIIGGKIKYIPIKTTDNQSNTESSQENNVIKKEPNNKLDKQPQKISSNIKDIVPKQETDKKSPVKSIKELSVNEPDDIDSIDQSNKLGKSYNTNNNNSKPIEKQRVPPSLVKKMEVYNSKLAKEMNNINRKKNISGKNVPSKYAKHIEDDVRKQTVRNVKSFSDLRRVKALQDITPDSGVDVNKASIAELKKMRLEQRKREIEEKRRQVENKKPDSAVQAILNNNDLSKFAKMVAIKNLSVNSRHRKMKTGNNVLNKE.

Disordered stretches follow at residues 1 to 55 (MNSS…SSHQ), 70 to 164 (DFSE…VEGQ), and 221 to 313 (TTDN…KQRV). Residues 40–50 (ENYKDNSDHSN) are compositionally biased toward basic and acidic residues. Over residues 73–82 (ESFNDNQNLK) the composition is skewed to polar residues. The span at 83 to 134 (NFNTTDNNFNDDYNNDYDSNNDSNNDSNNDSNNDYDNESNNYFNNDSNNDSN) shows a compositional bias: low complexity. Positions 141 to 150 (ETTKHKLPIE) are enriched in basic and acidic residues. Residues 221–235 (TTDNQSNTESSQENN) are compositionally biased toward low complexity. 2 stretches are compositionally biased toward basic and acidic residues: residues 236 to 249 (VIKK…DKQP) and 259 to 275 (IVPK…KSIK). Positions 288 to 306 (IDQSNKLGKSYNTNNNNSK) are enriched in polar residues. Residues 390 to 423 (NKASIAELKKMRLEQRKREIEEKRRQVENKKPDS) adopt a coiled-coil conformation.

This is an uncharacterized protein from Acanthamoeba polyphaga mimivirus (APMV).